Here is a 375-residue protein sequence, read N- to C-terminus: tRNA-specific 2-thiouridylase MnmA (375 aa).

ATP-binding positions include 17 to 24 (GMSGGVDS) and methionine 43. Residues 103-105 (NPD) form an interaction with target base in tRNA region. Cysteine 108 (nucleophile) is an active-site residue. Cysteine 108 and cysteine 204 are oxidised to a cystine. ATP is bound at residue glycine 132. Residues 154 to 156 (KDQ) are interaction with tRNA. Cysteine 204 acts as the Cysteine persulfide intermediate in catalysis. Positions 316–317 (RY) are interaction with tRNA.

This sequence belongs to the MnmA/TRMU family.

It localises to the cytoplasm. It carries out the reaction S-sulfanyl-L-cysteinyl-[protein] + uridine(34) in tRNA + AH2 + ATP = 2-thiouridine(34) in tRNA + L-cysteinyl-[protein] + A + AMP + diphosphate + H(+). In terms of biological role, catalyzes the 2-thiolation of uridine at the wobble position (U34) of tRNA, leading to the formation of s(2)U34. The polypeptide is tRNA-specific 2-thiouridylase MnmA (Stutzerimonas stutzeri (strain A1501) (Pseudomonas stutzeri)).